The chain runs to 669 residues: DNA ligase (669 aa).

NAD(+) contacts are provided by residues 34-38, 83-84, and Glu-114; these read DAEYD and SL. Catalysis depends on Lys-116, which acts as the N6-AMP-lysine intermediate. 4 residues coordinate NAD(+): Arg-137, Glu-171, Lys-287, and Lys-311. Zn(2+) contacts are provided by Cys-405, Cys-408, Cys-423, and Cys-428. Residues 591-669 form the BRCT domain; it reads NVESYFAGKT…EERFLQELNK (79 aa).

The protein belongs to the NAD-dependent DNA ligase family. LigA subfamily. The cofactor is Mg(2+). Mn(2+) is required as a cofactor.

The catalysed reaction is NAD(+) + (deoxyribonucleotide)n-3'-hydroxyl + 5'-phospho-(deoxyribonucleotide)m = (deoxyribonucleotide)n+m + AMP + beta-nicotinamide D-nucleotide.. Functionally, DNA ligase that catalyzes the formation of phosphodiester linkages between 5'-phosphoryl and 3'-hydroxyl groups in double-stranded DNA using NAD as a coenzyme and as the energy source for the reaction. It is essential for DNA replication and repair of damaged DNA. The chain is DNA ligase from Bacillus anthracis (strain A0248).